A 440-amino-acid polypeptide reads, in one-letter code: T-box transcription factor T homolog 2 (440 aa).

A DNA-binding region (T-box) is located at residues 44–215; sequence LWEKFKSLTN…HNPFAKAFLD (172 aa). 2 disordered regions span residues 282-303 and 393-440; these read APYPHPYQRSSPPTNYGHDTAA and TTAS…MPSM. Positions 409 to 440 are enriched in polar residues; it reads STDSGYGHSTTPPAPQTRITSNNWSPMTMPSM.

In terms of tissue distribution, mesoderm and notochord.

The protein resides in the nucleus. Functionally, involved in the transcriptional regulation of genes required for mesoderm formation and differentiation. The sequence is that of T-box transcription factor T homolog 2 from Branchiostoma floridae (Florida lancelet).